Here is a 195-residue protein sequence, read N- to C-terminus: Cytochrome c oxidase assembly protein CtaG (195 aa).

Residues 1–7 (MSGGKPR) are Cytoplasmic-facing. Residues 8–30 (SNTRTVAMLAGVVVLMGALSWAA) form a helical; Signal-anchor for type II membrane protein membrane-spanning segment. Residues 31–195 (VPFYSWFCKV…LDAKTEPTVN (165 aa)) are Periplasmic-facing.

The protein belongs to the COX11/CtaG family.

The protein localises to the cell inner membrane. Exerts its effect at some terminal stage of cytochrome c oxidase synthesis, probably by being involved in the insertion of the copper B into subunit I. In Paracoccus denitrificans (strain Pd 1222), this protein is Cytochrome c oxidase assembly protein CtaG.